A 729-amino-acid chain; its full sequence is Disintegrin and metalloproteinase domain-containing protein 21 (729 aa).

A signal peptide spans 1–39 (MECFIMLGADARTLMRVTLLLLWLKALPSLIDLSQTGST). The propeptide occupies 40 to 209 (QYLSSPEVVI…MKQNYGKLWP (170 aa)). The N-linked (GlcNAc...) asparagine glycan is linked to N169. The Cysteine switch signature appears at 176-183 (MLCSLTEK). C178 lines the Zn(2+) pocket. Residues 210-685 (HMWFLELAVV…DSGPTSQKRR (476 aa)) are Extracellular-facing. The Peptidase M12B domain maps to 212–402 (WFLELAVVVD…NQGTCLYNHP (191 aa)). The N-linked (GlcNAc...) asparagine glycan is linked to N231. 3 disulfide bridges follow: C320-C397, C360-C382, and C362-C367. H345 contacts Zn(2+). The active site involves E346. Zn(2+)-binding residues include H349 and H355. Residues N381, N441, and N482 are each glycosylated (N-linked (GlcNAc...) asparagine). A Disintegrin domain is found at 410 to 496 (VKRCGNGMVE…QCPEDGYVQD (87 aa)). 4 cysteine pairs are disulfide-bonded: C468-C488, C638-C649, C643-C655, and C657-C666. The region spanning 638–667 (CLPETCNRKGVCNNKHHCHCDYGWSPPFCL) is the EGF-like domain. Residues 686-706 (VIITVLSITVPVLSILICLLI) form a helical membrane-spanning segment. Over 707–729 (AGLYRIYCKIPSGPKETKASSPG) the chain is Cytoplasmic.

Zn(2+) is required as a cofactor. Post-translationally, has no obvious cleavage site for furin endopeptidase, suggesting that the proteolytic processing is regulated. In terms of tissue distribution, highly expressed in Leydig cells. Expressed also in cauda epididymidis, vas deferens, convoluted tubules, kidney and the parietal cells of stomach. Not detected on developing spermatocytes or mature sperm.

It localises to the membrane. May be involved in sperm maturation and/or fertilization. May also be involved in epithelia functions associated with establishing and maintaining gradients of ions or nutrients. In Mus musculus (Mouse), this protein is Disintegrin and metalloproteinase domain-containing protein 21 (Adam21).